Here is a 155-residue protein sequence, read N- to C-terminus: Small ribosomal subunit protein uS7 (155 aa).

The protein belongs to the universal ribosomal protein uS7 family. In terms of assembly, part of the 30S ribosomal subunit. Contacts proteins S9 and S11.

In terms of biological role, one of the primary rRNA binding proteins, it binds directly to 16S rRNA where it nucleates assembly of the head domain of the 30S subunit. Is located at the subunit interface close to the decoding center, probably blocks exit of the E-site tRNA. In Xylella fastidiosa (strain 9a5c), this protein is Small ribosomal subunit protein uS7.